We begin with the raw amino-acid sequence, 887 residues long: Microsomal triglyceride transfer protein large subunit (887 aa).

Positions 1–11 (FLCFISSYSAS) are cleaved as a signal peptide. A Vitellogenin domain is found at 21-655 (LNNDRLYKLT…YIEKTPLHGI (635 aa)). The cysteines at positions 167 and 187 are disulfide-linked.

Heterodimer; heterodimerizes with the protein disulfide isomerase (P4HB/PDI). Interacts with APOB. Interacts with PRAP1.

The protein localises to the endoplasmic reticulum. It localises to the golgi apparatus. It catalyses the reaction a 1,2-diacyl-sn-glycero-3-phosphocholine(in) = a 1,2-diacyl-sn-glycero-3-phosphocholine(out). It carries out the reaction a 1,2-diacyl-sn-glycero-3-phosphoethanolamine(in) = a 1,2-diacyl-sn-glycero-3-phosphoethanolamine(out). The enzyme catalyses a cholesterol ester(in) = a cholesterol ester(out). The catalysed reaction is a triacyl-sn-glycerol(in) = a triacyl-sn-glycerol(out). Its function is as follows. Catalyzes the transport of triglyceride, cholesteryl ester, and phospholipid between phospholipid surfaces. Required for the assembly and secretion of plasma lipoproteins that contain apolipoprotein B. May be involved in regulating cholesteryl ester biosynthesis in cells that produce lipoproteins. The sequence is that of Microsomal triglyceride transfer protein large subunit (MTTP) from Bos taurus (Bovine).